We begin with the raw amino-acid sequence, 443 residues long: L-seryl-tRNA(Sec) selenium transferase (443 aa).

The residue at position 285 (Lys-285) is an N6-(pyridoxal phosphate)lysine.

It belongs to the SelA family. Pyridoxal 5'-phosphate is required as a cofactor.

It localises to the cytoplasm. It catalyses the reaction L-seryl-tRNA(Sec) + selenophosphate + H(+) = L-selenocysteinyl-tRNA(Sec) + phosphate. It participates in aminoacyl-tRNA biosynthesis; selenocysteinyl-tRNA(Sec) biosynthesis; selenocysteinyl-tRNA(Sec) from L-seryl-tRNA(Sec) (bacterial route): step 1/1. In terms of biological role, converts seryl-tRNA(Sec) to selenocysteinyl-tRNA(Sec) required for selenoprotein biosynthesis. This is L-seryl-tRNA(Sec) selenium transferase from Campylobacter lari (strain RM2100 / D67 / ATCC BAA-1060).